A 94-amino-acid polypeptide reads, in one-letter code: Small ribosomal subunit protein uS19 (94 aa).

It belongs to the universal ribosomal protein uS19 family.

Its function is as follows. Protein S19 forms a complex with S13 that binds strongly to the 16S ribosomal RNA. This chain is Small ribosomal subunit protein uS19, found in Wolbachia pipientis subsp. Culex pipiens (strain wPip).